A 305-amino-acid polypeptide reads, in one-letter code: Spermatogenesis-associated protein 4 (305 aa).

The region spanning 49–155 (SRLSRSVLRW…EEVYTLLTHR (107 aa)) is the Calponin-homology (CH) domain.

It localises to the nucleus. May play a role in apoptosis regulation. In Pan troglodytes (Chimpanzee), this protein is Spermatogenesis-associated protein 4 (SPATA4).